The following is a 207-amino-acid chain: Transcriptional regulatory protein RcsA (207 aa).

Positions 131–196 (LNMPTLSLSR…VIYHVVRLTD (66 aa)) constitute an HTH luxR-type domain. Positions 155 to 174 (TIQISDQMNIKAKTVSSHKG) form a DNA-binding region, H-T-H motif.

This sequence belongs to the RcsA family. As to quaternary structure, interacts with RcsB.

Component of the Rcs signaling system, which controls transcription of numerous genes. Binds, with RcsB, to the RcsAB box to regulate expression of genes. The chain is Transcriptional regulatory protein RcsA from Escherichia coli O157:H7.